A 475-amino-acid chain; its full sequence is E3 ubiquitin-protein ligase TRIM21 (475 aa).

Residues 16–55 (CPICLDPFVEPVSIECGHSFCQECISQVGKGGGSVCPVCR) form an RING-type zinc finger. Positions 92, 95, 114, and 120 each coordinate Zn(2+). Residues 92–123 (CAVHGERLHLFCEKDGKALCWVCAQSRKHRDH) form a B box-type zinc finger. Residues 128–238 (LEEAAQEYQE…ISELDRRCHS (111 aa)) adopt a coiled-coil conformation. S266 carries the post-translational modification Phosphoserine. Residues 268–465 (ELRSVCHVPG…NTAPLTLCPL (198 aa)) form the B30.2/SPRY domain.

It belongs to the TRIM/RBCC family. In terms of assembly, homotrimer. Interacts (via C-terminus) with IRF8 (via C-terminus). Component of a SCF(SKP2)-like complex containing CUL1, SKP1, TRIM21 and SKP2. Interacts with CALR, CUL1, FBXW11, HSPA5, IKBKB, IRF3, SKP1 and VCP. Interacts with SKP2; the interaction with SKP2 does not depend on an intact F-box domain. Interacts (via N-terminus and C-terminus) with DCP2 (via N-terminus and C-terminus). Interacts with ULK1, BECN1 and with ATG8 family members, including GABARAP, GABARAPL1, GABARAPL2 and MAP1LC3C/LC3C. Interacts with TRIM21 and SQSTM1/sequestosome 1. Interacts with IRF3. Interacts (via the SPRY domain) with NMI (via coiled-coil domain); the interaction promotes 'Lys-63'-linked ubiquitination of NMI. Interacts with IFI35 and NMI; the interaction facilitates NMI-IFI35 complex formation. As to quaternary structure, (Microbial infection) Interacts (via B30.2/SPRY domain) with severe fever with thrombocytopenia syndrome virus (SFTSV) NSs; this interaction activates NFE2L2-mediated transcriptional activation of antioxidant genes. In terms of processing, autoubiquitinated; does not lead to its proteasomal degradation. Deubiquitinated by USP4; leading to its stabilization. As to expression, isoform 1 and isoform 2 are expressed in fetal and adult heart and fetal lung.

It localises to the cytoplasm. Its subcellular location is the cytoplasmic vesicle. The protein localises to the autophagosome. The protein resides in the nucleus. It is found in the P-body. It localises to the stress granule. The catalysed reaction is S-ubiquitinyl-[E2 ubiquitin-conjugating enzyme]-L-cysteine + [acceptor protein]-L-lysine = [E2 ubiquitin-conjugating enzyme]-L-cysteine + N(6)-ubiquitinyl-[acceptor protein]-L-lysine.. Its pathway is protein modification; protein ubiquitination. Functionally, E3 ubiquitin-protein ligase whose activity is dependent on E2 enzymes, UBE2D1, UBE2D2, UBE2E1 and UBE2E2. Forms a ubiquitin ligase complex in cooperation with the E2 UBE2D2 that is used not only for the ubiquitination of USP4 and IKBKB but also for its self-ubiquitination. Component of cullin-RING-based SCF (SKP1-CUL1-F-box protein) E3 ubiquitin-protein ligase complexes such as SCF(SKP2)-like complexes. A TRIM21-containing SCF(SKP2)-like complex is shown to mediate ubiquitination of CDKN1B ('Thr-187' phosphorylated-form), thereby promoting its degradation by the proteasome. Monoubiquitinates IKBKB that will negatively regulates Tax-induced NF-kappa-B signaling. Negatively regulates IFN-beta production post-pathogen recognition by catalyzing polyubiquitin-mediated degradation of IRF3. Mediates the ubiquitin-mediated proteasomal degradation of IgG1 heavy chain, which is linked to the VCP-mediated ER-associated degradation (ERAD) pathway. Promotes IRF8 ubiquitination, which enhanced the ability of IRF8 to stimulate cytokine genes transcription in macrophages. Plays a role in the regulation of the cell cycle progression. Enhances the decapping activity of DCP2. Exists as a ribonucleoprotein particle present in all mammalian cells studied and composed of a single polypeptide and one of four small RNA molecules. At least two isoforms are present in nucleated and red blood cells, and tissue specific differences in RO/SSA proteins have been identified. The common feature of these proteins is their ability to bind HY RNAs.2. Involved in the regulation of innate immunity and the inflammatory response in response to IFNG/IFN-gamma. Organizes autophagic machinery by serving as a platform for the assembly of ULK1, Beclin 1/BECN1 and ATG8 family members and recognizes specific autophagy targets, thus coordinating target recognition with assembly of the autophagic apparatus and initiation of autophagy. Also regulates autophagy through FIP200/RB1CC1 ubiquitination and subsequent decreased protein stability. Represses the innate antiviral response by facilitating the formation of the NMI-IFI35 complex through 'Lys-63'-linked ubiquitination of NMI. During viral infection, promotes cell pyroptosis by mediating 'Lys-6'-linked ubiquitination of ISG12a/IFI27, facilitating its translocation into the mitochondria and subsequent CASP3 activation. When up-regulated through the IFN/JAK/STAT signaling pathway, promotes 'Lys-27'-linked ubiquitination of MAVS, leading to the recruitment of TBK1 and up-regulation of innate immunity. Mediates 'Lys-63'-linked polyubiquitination of G3BP1 in response to heat shock, leading to stress granule disassembly. The sequence is that of E3 ubiquitin-protein ligase TRIM21 from Homo sapiens (Human).